The chain runs to 364 residues: Aminomethyltransferase (364 aa).

Belongs to the GcvT family. The glycine cleavage system is composed of four proteins: P, T, L and H.

The catalysed reaction is N(6)-[(R)-S(8)-aminomethyldihydrolipoyl]-L-lysyl-[protein] + (6S)-5,6,7,8-tetrahydrofolate = N(6)-[(R)-dihydrolipoyl]-L-lysyl-[protein] + (6R)-5,10-methylene-5,6,7,8-tetrahydrofolate + NH4(+). The glycine cleavage system catalyzes the degradation of glycine. In Thermotoga sp. (strain RQ2), this protein is Aminomethyltransferase.